A 135-amino-acid chain; its full sequence is uncharacterized protein (135 aa).

The interval 1–36 (MSHAEKPMSDSVNHHHHRTFEVLTAEPVRSRRKPRH) is disordered.

Belongs to the transposase 8 family.

This is an uncharacterized protein from Sinorhizobium fredii (strain NBRC 101917 / NGR234).